We begin with the raw amino-acid sequence, 647 residues long: Beta-glucosidase-like SFR2, chloroplastic (647 aa).

The disordered stretch occupies residues 116–140; that stretch reads SAAGDGGSQQSWRSTGGENIGDREQ. The segment covering 123–132 has biased composition (polar residues); the sequence is SQQSWRSTGG. Residue Asn-169 is glycosylated (N-linked (GlcNAc...) asparagine). Residues His-258, 302 to 303, Tyr-414, Glu-466, Trp-504, 511 to 512, and Phe-520 each bind a beta-D-glucoside; these read NE and EW. Glu-303 (proton donor) is an active-site residue. Residue Glu-466 is the Nucleophile of the active site.

It belongs to the glycosyl hydrolase 1 family.

It localises to the plastid. Its subcellular location is the chloroplast outer membrane. The catalysed reaction is 2 a 1,2-diacyl-3-O-(beta-D-galactosyl)-sn-glycerol = a 1,2-diacyl-3-O-[beta-D-galactosyl-(1-&gt;6)-beta-D-galactosyl]-sn-glycerol + a 1,2-diacyl-sn-glycerol. Galactosyltransferase synthesizing digalactosyldiacylglycerol from monogalactosyldiacylglycerol in the absence of UDP-galactose. Potentially involved in freezing tolerance. The polypeptide is Beta-glucosidase-like SFR2, chloroplastic (Oryza sativa subsp. japonica (Rice)).